A 1227-amino-acid polypeptide reads, in one-letter code: DNA-directed RNA polymerase subunit beta' (1227 aa).

Zn(2+)-binding residues include cysteine 60, cysteine 62, cysteine 75, and cysteine 78. Positions 449, 451, and 453 each coordinate Mg(2+). Positions 847, 921, 928, and 931 each coordinate Zn(2+).

Belongs to the RNA polymerase beta' chain family. As to quaternary structure, the RNAP catalytic core consists of 2 alpha, 1 beta, 1 beta' and 1 omega subunit. When a sigma factor is associated with the core the holoenzyme is formed, which can initiate transcription. Mg(2+) is required as a cofactor. The cofactor is Zn(2+).

It carries out the reaction RNA(n) + a ribonucleoside 5'-triphosphate = RNA(n+1) + diphosphate. DNA-dependent RNA polymerase catalyzes the transcription of DNA into RNA using the four ribonucleoside triphosphates as substrates. The sequence is that of DNA-directed RNA polymerase subunit beta' from Lysinibacillus sphaericus (strain C3-41).